The sequence spans 148 residues: Large ribosomal subunit protein uL15 (148 aa).

A compositionally biased stretch (basic and acidic residues) spans 1–12 (MSEPIKLHDLRP). The segment at 1–52 (MSEPIKLHDLRPAKGANKPKTRVGRGEASKGKTAGRGTKGTKARKQVSAAFE) is disordered.

Belongs to the universal ribosomal protein uL15 family. In terms of assembly, part of the 50S ribosomal subunit.

Binds to the 23S rRNA. The chain is Large ribosomal subunit protein uL15 from Corynebacterium diphtheriae (strain ATCC 700971 / NCTC 13129 / Biotype gravis).